Here is a 164-residue protein sequence, read N- to C-terminus: UPF0114 protein YqhA (164 aa).

The next 3 membrane-spanning stretches (helical) occupy residues 10–32, 53–75, and 136–155; these read YASR…ALAL, LILV…MVMF, and LMWY…VMGY.

This sequence belongs to the UPF0114 family.

The protein resides in the cell membrane. In Shigella flexneri, this protein is UPF0114 protein YqhA.